Consider the following 766-residue polypeptide: Pentatricopeptide repeat-containing protein At5g28460 (766 aa).

16 PPR repeats span residues 151–181 (TIVATKLLIRWFGRMGMVNQSVLVYERLDSN), 184–218 (NSQVRNVVVDVLLRNGLVDDAFKVLDEMLQKESVF), 221–257 (NRITADIVLHEVWKERLLTEEKIIALISRFSSHGVSP), 258–292 (NSVWLTRFISSLCKNARANTAWDILSDLMKNKTPL), 293–327 (EAPPFNALLSCLGRNMDISRMNDLVLKMDEVKIRP), 328–358 (DVVTLGILINTLCKSRRVDEALEVFEQMRGK), 369–404 (DSIHFNTLIDGLCKVGRLKEAEELLVRMKLEERCVP), 405–439 (NAVTYNCLIDGYCRAGKLETAKEVVSRMKEDEIKP), 440–474 (NVVTVNTIVGGMCRHHGLNMAVVFFMDMEKEGVKG), 475–509 (NVVTYMTLIHACCSVSNVEKAMYWYEKMLEAGCSP), 510–544 (DAKIYYALISGLCQVRRDHDAIRVVEKLKEGGFSL), 545–579 (DLLAYNMLIGLFCDKNNAEKVYEMLTDMEKEGKKP), 580–614 (DSITYNTLISFFGKHKDFESVERMMEQMREDGLDP), 615–650 (TVTTYGAVIDAYCSVGELDEALKLFKDMGLHSKVNP), 651–685 (NTVIYNILINAFSKLGNFGQALSLKEEMKMKMVRP), and 686–720 (NVETYNALFKCLNEKTQGETLLKLMDEMVEQSCEP).

This sequence belongs to the PPR family. P subfamily.

This is Pentatricopeptide repeat-containing protein At5g28460 from Arabidopsis thaliana (Mouse-ear cress).